A 139-amino-acid chain; its full sequence is Ribulose bisphosphate carboxylase small subunit (139 aa).

Belongs to the RuBisCO small chain family. Heterohexadecamer of 8 large and 8 small subunits.

It localises to the plastid. The protein localises to the chloroplast. Functionally, ruBisCO catalyzes two reactions: the carboxylation of D-ribulose 1,5-bisphosphate, the primary event in carbon dioxide fixation, as well as the oxidative fragmentation of the pentose substrate in the photorespiration process. Both reactions occur simultaneously and in competition at the same active site. Although the small subunit is not catalytic it is essential for maximal activity. This Guillardia theta (Cryptophyte) protein is Ribulose bisphosphate carboxylase small subunit.